Consider the following 460-residue polypeptide: V-type ATP synthase beta chain (460 aa).

The protein belongs to the ATPase alpha/beta chains family.

Produces ATP from ADP in the presence of a proton gradient across the membrane. The V-type beta chain is a regulatory subunit. This is V-type ATP synthase beta chain from Clostridium perfringens (strain ATCC 13124 / DSM 756 / JCM 1290 / NCIMB 6125 / NCTC 8237 / Type A).